The sequence spans 386 residues: Succinate--CoA ligase [ADP-forming] subunit beta (386 aa).

The ATP-grasp domain maps to 9 to 244; sequence KDLLTAYQLP…PSQENIRDVL (236 aa). Residues K46, 53–55, V102, and E107 contribute to the ATP site; that span reads GRG. N199 and D213 together coordinate Mg(2+). Residues N264 and 321 to 323 contribute to the substrate site; that span reads GIM.

This sequence belongs to the succinate/malate CoA ligase beta subunit family. In terms of assembly, heterotetramer of two alpha and two beta subunits. Mg(2+) serves as cofactor.

The catalysed reaction is succinate + ATP + CoA = succinyl-CoA + ADP + phosphate. The enzyme catalyses GTP + succinate + CoA = succinyl-CoA + GDP + phosphate. The protein operates within carbohydrate metabolism; tricarboxylic acid cycle; succinate from succinyl-CoA (ligase route): step 1/1. Functionally, succinyl-CoA synthetase functions in the citric acid cycle (TCA), coupling the hydrolysis of succinyl-CoA to the synthesis of either ATP or GTP and thus represents the only step of substrate-level phosphorylation in the TCA. The beta subunit provides nucleotide specificity of the enzyme and binds the substrate succinate, while the binding sites for coenzyme A and phosphate are found in the alpha subunit. The polypeptide is Succinate--CoA ligase [ADP-forming] subunit beta (Chlamydia trachomatis serovar L2 (strain ATCC VR-902B / DSM 19102 / 434/Bu)).